Consider the following 192-residue polypeptide: Small ribosomal subunit protein eS7 (192 aa).

The protein belongs to the eukaryotic ribosomal protein eS7 family.

In Secale cereale (Rye), this protein is Small ribosomal subunit protein eS7 (RPS7).